Reading from the N-terminus, the 190-residue chain is GTP cyclohydrolase 1 (190 aa).

3 residues coordinate Zn(2+): Cys-78, His-81, and Cys-150.

This sequence belongs to the GTP cyclohydrolase I family. In terms of assembly, toroid-shaped homodecamer, composed of two pentamers of five dimers.

It catalyses the reaction GTP + H2O = 7,8-dihydroneopterin 3'-triphosphate + formate + H(+). Its pathway is cofactor biosynthesis; 7,8-dihydroneopterin triphosphate biosynthesis; 7,8-dihydroneopterin triphosphate from GTP: step 1/1. Its activity is regulated as follows. K(+) ions moderately increases the Vmax, whereas UTP and Ca(2+) and Mg(2+) ions drastically increase the Km for GTP. This is GTP cyclohydrolase 1 (folE) from Bacillus subtilis (strain 168).